The chain runs to 153 residues: 3-hydroxyacyl-[acyl-carrier-protein] dehydratase FabZ (153 aa).

Residue His-54 is part of the active site.

It belongs to the thioester dehydratase family. FabZ subfamily.

It is found in the cytoplasm. It catalyses the reaction a (3R)-hydroxyacyl-[ACP] = a (2E)-enoyl-[ACP] + H2O. Functionally, involved in unsaturated fatty acids biosynthesis. Catalyzes the dehydration of short chain beta-hydroxyacyl-ACPs and long chain saturated and unsaturated beta-hydroxyacyl-ACPs. The chain is 3-hydroxyacyl-[acyl-carrier-protein] dehydratase FabZ from Chlamydia pneumoniae (Chlamydophila pneumoniae).